The chain runs to 134 residues: Small ribosomal subunit protein uS11 (134 aa).

It belongs to the universal ribosomal protein uS11 family. As to quaternary structure, part of the 30S ribosomal subunit. Interacts with proteins S7 and S18. Binds to IF-3.

In terms of biological role, located on the platform of the 30S subunit, it bridges several disparate RNA helices of the 16S rRNA. Forms part of the Shine-Dalgarno cleft in the 70S ribosome. This is Small ribosomal subunit protein uS11 from Leptothrix cholodnii (strain ATCC 51168 / LMG 8142 / SP-6) (Leptothrix discophora (strain SP-6)).